We begin with the raw amino-acid sequence, 277 residues long: Large ribosomal subunit protein uL2 (277 aa).

The segment at 222–277 (GVAMNPVDHPHGGGEGRTSGGRHPVSPWGKSTKGKRTRSNKATDKFIMHTRHQRKK) is disordered.

This sequence belongs to the universal ribosomal protein uL2 family. In terms of assembly, part of the 50S ribosomal subunit. Forms a bridge to the 30S subunit in the 70S ribosome.

Its function is as follows. One of the primary rRNA binding proteins. Required for association of the 30S and 50S subunits to form the 70S ribosome, for tRNA binding and peptide bond formation. It has been suggested to have peptidyltransferase activity; this is somewhat controversial. Makes several contacts with the 16S rRNA in the 70S ribosome. The protein is Large ribosomal subunit protein uL2 of Bartonella quintana (strain Toulouse) (Rochalimaea quintana).